We begin with the raw amino-acid sequence, 324 residues long: Lactonase drp35 (324 aa).

Ca(2+) contacts are provided by Glu47, Ser109, Gly111, Asp129, Thr132, Tyr134, Asp137, Asn184, Asp235, and Ser236. The active-site Proton donor is Asp235.

It belongs to the SMP-30/CGR1 family. Ca(2+) is required as a cofactor.

Its subcellular location is the cytoplasm. Its function is as follows. Exhibits lactonase activity. Acts in cells with perturbed membrane integrity and is possibly related to the membrane homeostasis. The sequence is that of Lactonase drp35 (drp35) from Staphylococcus aureus (strain MRSA252).